The sequence spans 404 residues: Dihydroorotase (404 aa).

Residues H57 and H59 each contribute to the Zn(2+) site. Substrate-binding positions include H59–R61 and N91. Residues K135, H164, H204, and D272 each coordinate Zn(2+). Position 135 is an N6-carboxylysine (K135). D272 is a catalytic residue. Residues H276 and A286–G287 contribute to the substrate site.

Belongs to the metallo-dependent hydrolases superfamily. DHOase family. Class I DHOase subfamily. Zn(2+) is required as a cofactor.

The enzyme catalyses (S)-dihydroorotate + H2O = N-carbamoyl-L-aspartate + H(+). It functions in the pathway pyrimidine metabolism; UMP biosynthesis via de novo pathway; (S)-dihydroorotate from bicarbonate: step 3/3. Functionally, catalyzes the reversible cyclization of carbamoyl aspartate to dihydroorotate. In Pyrococcus abyssi (strain GE5 / Orsay), this protein is Dihydroorotase.